The chain runs to 341 residues: UDP-3-O-acylglucosamine N-acyltransferase (341 aa).

The Proton acceptor role is filled by His240.

It belongs to the transferase hexapeptide repeat family. LpxD subfamily. As to quaternary structure, homotrimer.

The enzyme catalyses a UDP-3-O-[(3R)-3-hydroxyacyl]-alpha-D-glucosamine + a (3R)-hydroxyacyl-[ACP] = a UDP-2-N,3-O-bis[(3R)-3-hydroxyacyl]-alpha-D-glucosamine + holo-[ACP] + H(+). It participates in bacterial outer membrane biogenesis; LPS lipid A biosynthesis. In terms of biological role, catalyzes the N-acylation of UDP-3-O-acylglucosamine using 3-hydroxyacyl-ACP as the acyl donor. Is involved in the biosynthesis of lipid A, a phosphorylated glycolipid that anchors the lipopolysaccharide to the outer membrane of the cell. This chain is UDP-3-O-acylglucosamine N-acyltransferase, found in Cellvibrio japonicus (strain Ueda107) (Pseudomonas fluorescens subsp. cellulosa).